A 458-amino-acid polypeptide reads, in one-letter code: NALCN channel auxiliary factor 1 (458 aa).

Residues leucine 40 to alanine 60 traverse the membrane as a helical segment. Residues lysine 70–alanine 155 are disordered. The segment covering glutamine 75 to arginine 96 has biased composition (low complexity). Over residues glycine 136–glycine 145 the composition is skewed to gly residues. Cystine bridges form between cysteine 191-cysteine 261, cysteine 226-cysteine 313, cysteine 246-cysteine 261, cysteine 304-cysteine 341, cysteine 324-cysteine 377, cysteine 330-cysteine 376, and cysteine 334-cysteine 361. N-linked (GlcNAc...) asparagine glycosylation is present at asparagine 217. A helical transmembrane segment spans residues leucine 417–glutamine 437.

The protein belongs to the NALF family. In terms of assembly, component of the NALCN channel complex. NALCN complex consists of NALCN and auxiliary subunits, UNC79, UNC80 and NACL1. These auxiliary subunits are essential for the NALCN channel function.

The protein resides in the cell membrane. Auxillary component of the NALCN sodium channel complex, a channel that regulates the resting membrane potential and controls neuronal excitability. The sequence is that of NALCN channel auxiliary factor 1 from Homo sapiens (Human).